A 100-amino-acid chain; its full sequence is Large ribosomal subunit protein uL23 (100 aa).

This sequence belongs to the universal ribosomal protein uL23 family. Part of the 50S ribosomal subunit. Contacts protein L29, and trigger factor when it is bound to the ribosome.

In terms of biological role, one of the early assembly proteins it binds 23S rRNA. One of the proteins that surrounds the polypeptide exit tunnel on the outside of the ribosome. Forms the main docking site for trigger factor binding to the ribosome. This Prochlorococcus marinus subsp. pastoris (strain CCMP1986 / NIES-2087 / MED4) protein is Large ribosomal subunit protein uL23.